A 2845-amino-acid chain; its full sequence is MALGKVLAMALVLALAVLGSLSPGARAGDCKGQRQVLREAPGFVTDGAGNYSVNGNCEWLIEAPSPQHRILLDFLFLDTECTYDYLFVYDGDSPRGPLLASLSGSTRPPPIEASSGKMLLHLFSDANYNLLGFNASFRFSLCPGGCQSHGQCQPPGVCACEPGWGGPDCGLQECSAYCGSHGTCASPLGPCRCEPGFLGRACDLHLWENQGAGWWHNVSARDPAFSARIGAAGAFLSPPGLLAVFGGQDLNNALGDLVLYNFSANTWESWDLSPAPAARHSHVAVAWAGSLVLMGGELADGSLTNDVWAFSPLGRGHWELLAPPASSSSGPPGLAGHAAALVDDVWLYVSGGRTPHDLFSSGLFRFRLDSTSGGYWEQVIPAGGRPPAATGHSMVFHAPSRALLVHGGHRPSTARFSVRVNSTELFHVDRHVWTTLKGRDGLQGPRERAFHTASVLGNYMVVYGGNVHTHYQEEKCYEDGIFFYHLGCHQWVSGAELAPPGTPEGRAAPPSGRYSHVAAVLGGSVLLVAGGYSGRPRGDLMAYKVPPFVFQAPAPDYHLDYCSMYTDHSVCSRDPECSWCQGACQAAPPPGTPLGACPAASCLGLGRLLGDCQACLAFSSPTAPPRGPGTLGWCVHNESCLPRPEQARCRGEQISGTVGWWGPAPVFVTSLEACVTQSFLPGLHLLTFQQPPNTSQPDKVSIVRSTTITLTPSAETDVSLVYRGFIYPMLPGGPGGPGAEDVAVWTRAQRLHVLARMARGPDTENMEEVGRWVAHQEKETRRLQRPGSARLFPLPGRDHKYAVEIQGQLNGSAGPGHSELTLLWDRTGVPGGSEISFFFLEPYRSSSCTSYSSCLGCLADQGCGWCLTSATCHLRQGGAHCGDDGAGGSLLVLVPTLCPLCEEHRDCHACTQDPFCEWHQSTSRKGDAACSRRGRGRGALKSPEECPPLCSQRLTCEDCLANSSQCAWCQSTHTCFLFAAYLARYPHGGCRGWDDSVHSEPRCRSCDGFLTCHECLQSHECGWCGNEDNPTLGRCLQGDFSGPLGGGNCSLWVGEGLGLPVALPARWAYARCPDVDECRLGLARCHPRATCLNTPLSYECHCQRGYQGDGISHCNRTCLEDCGHGVCSGPPDFTCVCDLGWTSDLPPPTPAPGPPAPRCSRDCGCSFHSHCRKRGPGFCDECQDWTWGEHCERCRPGSFGNATGSRGCRPCQCNGHGDPRRGHCDNLSGLCFCQDHTEGAHCQLCSPGYYGDPRAGGSCFRECGGRALLTNVSSVALGSRRVGGLLPPGGGAARAGPGLSYCVWVVSATEELQPCAPGTLCPPLTLTFSPDSSTPCTLSYVLAFDGFPRFLDTGVVQSDRSLIAAFCGQRRDRPLTVQALSGLLVLHWEANGSSSWGFNASVGSARCGSGGPGSCPVPQECVPQDGAAGAGLCRCPQGWAGPHCRMALCPENCNAHTGAGTCNQSLGVCICAEGFGGPDCATKLDGGQLVWETLMDSRLSADTASRFLHRLGHTMVDGPDATLWMFGGLGLPQGLLGNLYRYSVSERRWTQMLAGAEDGGPGPSPRSFHAAAYVPAGRGAMYLLGGLTAGGVTRDFWVLNLTTLQWRQEKAPQTVELPAVAGHTLTARRGLSLLLVGGYSPENGFNQQLLEYQLATGTWVSGAQSGTPPTGLYGHSAVYHEATDSLYVFGGFRFHVELAAPSPELYSLHCPDRTWSLLAPSQGAKRDRMRNVRGSSRGLGQVPGEQPGSWGFREVRKKMALWAALAGTGGFLEEISPHLKEPRPRLFHASALLGDTMVVLGGRSDPDEFSSDVLLYQVNCNAWLLPDLTRSASVGPPMEESVAHAVAAVGSRLYISGGFGGVALGRLLALTLPPDPCRLLSSPEACNQSGACTWCHGACLSGDQAHRLGCGGSPCSPMPRSPEECRRLRTCSECLARHPRTLQPGDGEASTPRCKWCTNCPEGACIGRNGSCTSENDCRINQREVFWAGNCSEAACGAADCEQCTREGKCMWTRQFKRTGETRRILSVQPTYDWTCFSHSLLNVSPMPVESSPPLPCPTPCHLLPNCTSCLDSKGADGGWQHCVWSSSLQQCLSPSYLPLRCMAGGCGRLLRGPESCSLGCAQATQCALCLRRPHCGWCAWGGQDGGGRCMEGGLSGPRDGLTCGRPGASWAFLSCPPEDECANGHHDCNETQNCHDQPHGYECSCKTGYTMDNMTGLCRPVCAQGCVNGSCVEPDHCRCHFGFVGRNCSTECRCNRHSECAGVGARDHCLLCRNHTKGSHCEQCLPLFVGSAVGGGTCRPCHAFCRGNSHICISRKELQMSKGEPKKYSLDPEEIENWVTEGPSEDEAVCVNCQNNSYGEKCESCLQGYFLLDGKCTKCQCNGHADTCNEQDGTGCPCQNNTETGTCQGSSPSDRRDCYKYQCAKCRESFHGSPLGGQQCYRLISVEQECCLDPTSQTNCFHEPKRRALGPGRTVLFGVQPKFTNVDIRLTLDVTFGAVDLYVSTSYDTFVVRVAPDTGVHTVHIQPPPAPPPPPPPADGGPRGAGDPGGAGASSGPGAPAEPRVREVWPRGLITYVTVTEPSAVLVVRGVRDRLVITYPHEHHALKSSRFYLLLLGVGDPSGPGANGSADSQGLLFFRQDQAHIDLFVFFSVFFSCFFLFLSLCVLLWKAKQALDQRQEQRRHLQEMTKMASRPFAKVTVCFPPDPTAPASAWKPAGLPPPAFRRSEPFLAPLLLTGAGGPWGPMGGGCCPPAIPATTAGLRAGPITLEPTEDGMAGVATLLLQLPGGPHAPNGACLGSALVTLRHRLHEYCGGGGGAGGSGHGTGAGRKGLLSQDNLTSMSL.

The first 27 residues, 1 to 27 (MALGKVLAMALVLALAVLGSLSPGARA), serve as a signal peptide directing secretion. Residues 28–2647 (GDCKGQRQVL…FFRQDQAHID (2620 aa)) lie on the Extracellular side of the membrane. Intrachain disulfides connect cysteine 30/cysteine 57, cysteine 142/cysteine 152, cysteine 146/cysteine 158, cysteine 174/cysteine 184, cysteine 178/cysteine 191, and cysteine 193/cysteine 202. One can recognise a CUB 1 domain in the interval 30–140 (CKGQRQVLRE…LGFNASFRFS (111 aa)). N-linked (GlcNAc...) asparagine glycosylation occurs at asparagine 50. EGF-like domains are found at residues 138 to 168 (RFSL…GGPD) and 170 to 203 (GLQE…RACD). N-linked (GlcNAc...) asparagine glycosylation occurs at asparagine 217. Kelch repeat units follow at residues 241 to 287 (LLAV…AVAW), 290 to 338 (SLVL…AGHA), 346 to 399 (WLYV…FHAP), 402 to 453 (ALLV…FHTA), 459 to 511 (YMVV…APPS), and 525 to 575 (VLLV…SRDP). PSI domains follow at residues 561 to 613 (YCSM…GDCQ), 847 to 899 (SCTS…TLCP), and 900 to 947 (LCEE…EECP). A glycan (N-linked (GlcNAc...) asparagine) is linked at asparagine 1048. The 42-residue stretch at 1074–1115 (DVDECRLGLARCHPRATCLNTPLSYECHCQRGYQGDGISHCN) folds into the EGF-like 3; calcium-binding domain. Cystine bridges form between cysteine 1078/cysteine 1091, cysteine 1085/cysteine 1100, cysteine 1102/cysteine 1114, cysteine 1163/cysteine 1171, cysteine 1165/cysteine 1179, cysteine 1182/cysteine 1191, cysteine 1194/cysteine 1208, cysteine 1211/cysteine 1224, cysteine 1213/cysteine 1231, cysteine 1233/cysteine 1242, cysteine 1245/cysteine 1259, cysteine 1263/cysteine 1302, cysteine 1336/cysteine 1367, cysteine 1407/cysteine 1421, cysteine 1415/cysteine 1433, and cysteine 1435/cysteine 1444. 2 Laminin EGF-like domains span residues 1163 to 1210 (CGCS…GCRP) and 1211 to 1261 (CQCN…SCFR). In terms of domain architecture, CUB 2 spans 1263–1405 (CGGRALLTNV…WGFNASVGSA (143 aa)). A glycan (N-linked (GlcNAc...) asparagine) is linked at asparagine 1271. A Phosphothreonine modification is found at threonine 1353. The region spanning 1403–1445 (GSARCGSGGPGSCPVPQECVPQDGAAGAGLCRCPQGWAGPHCR) is the EGF-like 4 domain. Kelch repeat units lie at residues 1522 to 1570 (TLWM…SFHA), 1580 to 1626 (AMYL…HTLT), 1632 to 1679 (SLLL…SAVY), 1685 to 1735 (SLYV…VRGS), 1796 to 1843 (TMVV…ESVA), and 1852 to 1898 (RLYI…CHGA). The tract at residues 1726 to 1745 (RDRMRNVRGSSRGLGQVPGE) is disordered. PSI domains are found at residues 1876–1916 (PCRL…SPCS), 1924–1979 (ECRR…NDCR), 2060–2118 (PCHL…ESCS), and 2120–2177 (GCAQ…LSCP). Asparagine 2066 carries an N-linked (GlcNAc...) asparagine glycan. Positions 2178-2216 (PEDECANGHHDCNETQNCHDQPHGYECSCKTGYTMDNMT) constitute an EGF-like 5 domain. Intrachain disulfides connect cysteine 2182/cysteine 2195 and cysteine 2189/cysteine 2204. An N-linked (GlcNAc...) asparagine glycan is attached at asparagine 2229. 8 disulfide bridges follow: cysteine 2253–cysteine 2261, cysteine 2255–cysteine 2270, cysteine 2273–cysteine 2282, cysteine 2285–cysteine 2299, cysteine 2380–cysteine 2389, cysteine 2382–cysteine 2397, cysteine 2399–cysteine 2424, and cysteine 2427–cysteine 2441. 2 consecutive Laminin EGF-like domains span residues 2253–2301 (CRCN…TCRP) and 2380–2443 (CQCN…QCYR). The disordered stretch occupies residues 2523–2564 (TVHIQPPPAPPPPPPPADGGPRGAGDPGGAGASSGPGAPAEP). The segment covering 2527-2540 (QPPPAPPPPPPPAD) has biased composition (pro residues). A compositionally biased stretch (gly residues) spans 2542 to 2556 (GPRGAGDPGGAGASS). Residues 2648–2668 (LFVFFSVFFSCFFLFLSLCVL) form a helical membrane-spanning segment. The Cytoplasmic portion of the chain corresponds to 2669-2845 (LWKAKQALDQ…SQDNLTSMSL (177 aa)). Residues 2817–2831 (GGGAGGSGHGTGAGR) are compositionally biased toward gly residues. Residues 2817–2845 (GGGAGGSGHGTGAGRKGLLSQDNLTSMSL) form a disordered region. Positions 2836–2845 (SQDNLTSMSL) are enriched in polar residues.

The protein localises to the membrane. Its function is as follows. Acts as a negative regulator of hedgehog signaling. This chain is Multiple epidermal growth factor-like domains protein 8 (MEGF8), found in Homo sapiens (Human).